Consider the following 88-residue polypeptide: MITKAKKAEIITRFGKSEKNTGDISVQIALLPEDIEKLKLHFEKNKKDKHSMRGFIAKVNKRKKLLNYLKEKNFASYKETIEALNIRK.

The protein belongs to the universal ribosomal protein uS15 family. In terms of assembly, part of the 30S ribosomal subunit. Forms a bridge to the 50S subunit in the 70S ribosome, contacting the 23S rRNA.

One of the primary rRNA binding proteins, it binds directly to 16S rRNA where it helps nucleate assembly of the platform of the 30S subunit by binding and bridging several RNA helices of the 16S rRNA. In terms of biological role, forms an intersubunit bridge (bridge B4) with the 23S rRNA of the 50S subunit in the ribosome. The polypeptide is Small ribosomal subunit protein uS15 (Mesomycoplasma flocculare (Mycoplasma flocculare)).